The chain runs to 1388 residues: Kinesin-like protein KIF15-A (1388 aa).

One can recognise a Kinesin motor domain in the interval 26-364 (AIKVFVRIRP…LQFAQRAKLI (339 aa)). 110–117 (GQTGSGKT) provides a ligand contact to ATP. A coiled-coil region spans residues 369–1383 (VVNEDTQGNV…ENLFLKESKK (1015 aa)). Positions 1127–1156 (EQEKIRPASSNSSSPVVLPETPRTPEGNPY) are disordered. The necessary for its targeting to microtubule minus ends stretch occupies residues 1139 to 1388 (SSPVVLPETP…KESKKCEHCN (250 aa)).

Belongs to the TRAFAC class myosin-kinesin ATPase superfamily. Kinesin family. KLP2 subfamily. Homodimer. Dimerization is required for targeting to microtubule minus ends. Found in a complex with tpx2 and microtubules. Its association with microtubules and targeting to microtubule minus ends requires tpx2. Strongly expressed in testis and weakly in lung (at protein level).

The protein localises to the cytoplasm. It localises to the cytoskeleton. It is found in the microtubule organizing center. The protein resides in the centrosome. Its subcellular location is the spindle. The protein localises to the spindle pole. In terms of biological role, plus-end directed kinesin-like motor enzyme involved in mitotic spindle assembly. Required for centrosome separation and maintenance of spindle bipolarity during mitosis. This Xenopus laevis (African clawed frog) protein is Kinesin-like protein KIF15-A (kif15-a).